The primary structure comprises 307 residues: D-alanine--D-alanine ligase (307 aa).

The 201-residue stretch at lysine 101–glutamate 301 folds into the ATP-grasp domain. Proline 127 to threonine 182 provides a ligand contact to ATP. Mg(2+)-binding residues include aspartate 251, glutamate 268, and asparagine 270.

Belongs to the D-alanine--D-alanine ligase family. Mg(2+) is required as a cofactor. It depends on Mn(2+) as a cofactor.

It is found in the cytoplasm. The enzyme catalyses 2 D-alanine + ATP = D-alanyl-D-alanine + ADP + phosphate + H(+). The protein operates within cell wall biogenesis; peptidoglycan biosynthesis. In terms of biological role, cell wall formation. This Methylorubrum extorquens (strain CM4 / NCIMB 13688) (Methylobacterium extorquens) protein is D-alanine--D-alanine ligase.